The sequence spans 623 residues: Glutathione import ATP-binding protein GsiA (623 aa).

2 consecutive ABC transporter domains span residues 15 to 269 (VENL…RALL) and 314 to 564 (LRVR…RKLL). ATP-binding positions include 49–56 (GESGSGKS) and 357–364 (GESGSGKS).

This sequence belongs to the ABC transporter superfamily. Glutathione importer (TC 3.A.1.5.11) family. As to quaternary structure, the complex is composed of two ATP-binding proteins (GsiA), two transmembrane proteins (GsiC and GsiD) and a solute-binding protein (GsiB).

Its subcellular location is the cell inner membrane. The catalysed reaction is glutathione(out) + ATP + H2O = glutathione(in) + ADP + phosphate + H(+). In terms of biological role, part of the ABC transporter complex GsiABCD involved in glutathione import. Responsible for energy coupling to the transport system. The protein is Glutathione import ATP-binding protein GsiA of Shigella flexneri serotype 5b (strain 8401).